The sequence spans 97 residues: Co-chaperonin GroES (97 aa).

Belongs to the GroES chaperonin family. In terms of assembly, heptamer of 7 subunits arranged in a ring. Interacts with the chaperonin GroEL.

It is found in the cytoplasm. Together with the chaperonin GroEL, plays an essential role in assisting protein folding. The GroEL-GroES system forms a nano-cage that allows encapsulation of the non-native substrate proteins and provides a physical environment optimized to promote and accelerate protein folding. GroES binds to the apical surface of the GroEL ring, thereby capping the opening of the GroEL channel. The protein is Co-chaperonin GroES of Oleispira antarctica.